The primary structure comprises 783 residues: Cation/H(+) antiporter 10 (783 aa).

12 helical membrane passes run 31-51 (VVFG…FFCI), 61-81 (IGIS…PQLF), 100-120 (IAAL…LMTV), 135-155 (VVIG…QNFF), 175-195 (AIVI…LLEL), 206-226 (ALSA…VASI), 244-264 (AVII…QWVI), 276-295 (MYIH…FVFF), 300-322 (ILGP…ALEA), 356-376 (IFFN…ACLA), 389-409 (LAVS…YEAV), and 418-438 (ATYS…PTVL).

Belongs to the monovalent cation:proton antiporter 2 (CPA2) transporter (TC 2.A.37) family. CHX (TC 2.A.37.4) subfamily. Specifically expressed in pollen.

The protein resides in the membrane. Its function is as follows. May operate as a cation/H(+) antiporter. The protein is Cation/H(+) antiporter 10 (CHX10) of Arabidopsis thaliana (Mouse-ear cress).